A 337-amino-acid polypeptide reads, in one-letter code: Anthranilate phosphoribosyltransferase (337 aa).

Residues Gly-81, 84-85 (GD), Ser-89, 91-94 (NVST), 109-117 (KHGNRAATS), and Ala-121 each bind 5-phospho-alpha-D-ribose 1-diphosphate. Gly-81 contributes to the anthranilate binding site. Ser-93 contributes to the Mg(2+) binding site. Residue Asn-112 coordinates anthranilate. Arg-167 contributes to the anthranilate binding site. Mg(2+)-binding residues include Asp-226 and Glu-227.

It belongs to the anthranilate phosphoribosyltransferase family. As to quaternary structure, homodimer. Mg(2+) is required as a cofactor.

The catalysed reaction is N-(5-phospho-beta-D-ribosyl)anthranilate + diphosphate = 5-phospho-alpha-D-ribose 1-diphosphate + anthranilate. Its pathway is amino-acid biosynthesis; L-tryptophan biosynthesis; L-tryptophan from chorismate: step 2/5. Its function is as follows. Catalyzes the transfer of the phosphoribosyl group of 5-phosphorylribose-1-pyrophosphate (PRPP) to anthranilate to yield N-(5'-phosphoribosyl)-anthranilate (PRA). This Methylorubrum extorquens (strain PA1) (Methylobacterium extorquens) protein is Anthranilate phosphoribosyltransferase.